Consider the following 513-residue polypeptide: E3 ubiquitin-protein ligase RNF25 (513 aa).

The RWD domain occupies 9–117 (SEIEVLQSIY…ERAKEILTDS (109 aa)). Positions 124, 127, 142, 144, 147, 150, 187, and 190 each coordinate Zn(2+). The RING-type; atypical zinc-finger motif lies at 124 to 191 (CVICLYDFKE…ELAVVCPVCR (68 aa)). The segment at 261-513 (NLSDTPGMTD…EKEFRKEGVL (253 aa)) is disordered. Over residues 271–297 (SSGAESSQSLPSSSPDSTSTTQTSQNQ) the composition is skewed to low complexity. Polar residues-rich tracts occupy residues 345 to 397 (SDKI…QDML) and 406 to 423 (EVSQQKECISKEVTQTIL). Over residues 426–440 (GHPEREHVGRGDKRG) the composition is skewed to basic and acidic residues. Over residues 482–498 (AGRGHRGGGAYRGGGRG) the composition is skewed to gly residues. Over residues 501 to 513 (QRVEKEFRKEGVL) the composition is skewed to basic and acidic residues.

It belongs to the RNF25 family.

It localises to the cytoplasm. The enzyme catalyses S-ubiquitinyl-[E2 ubiquitin-conjugating enzyme]-L-cysteine + [acceptor protein]-L-lysine = [E2 ubiquitin-conjugating enzyme]-L-cysteine + N(6)-ubiquitinyl-[acceptor protein]-L-lysine.. It functions in the pathway protein modification; protein ubiquitination. Functionally, E3 ubiquitin-protein ligase that plays a key role in the RNF14-RNF25 translation quality control pathway, a pathway that takes place when a ribosome has stalled during translation, and which promotes ubiquitination and degradation of translation factors on stalled ribosomes. May also acts as a positive regulator of the Wnt signaling. The chain is E3 ubiquitin-protein ligase RNF25 from Danio rerio (Zebrafish).